We begin with the raw amino-acid sequence, 893 residues long: UPF0182 protein CLB_0018 (893 aa).

7 helical membrane-spanning segments follow: residues 9–29 (IPLFIIILFIAFFNKIINFII), 49–69 (AIIILMIPIFIIFFISIWMYY), 94–114 (LFFIFNFIVSIFLAYIFSSSY), 154–174 (VIISLLLFLVITTFIAYFILE), 202–222 (LAIVSGLIILFISFGHLIKIW), 246–266 (FYKIIVVITLISSIVTLLSIV), and 273–293 (VSICIGITIFLIVSQNIASFL).

The protein belongs to the UPF0182 family.

The protein localises to the cell membrane. The protein is UPF0182 protein CLB_0018 of Clostridium botulinum (strain ATCC 19397 / Type A).